Here is a 714-residue protein sequence, read N- to C-terminus: Cell wall protein IFF7 (714 aa).

The first 19 residues, 1–19, serve as a signal peptide directing secretion; it reads MLFTLSILSTLLFSTSISA. Asn-200 carries an N-linked (GlcNAc...) asparagine glycan. The segment covering 320–330 has biased composition (polar residues); it reads GPVPSQKSLPS. 2 disordered regions span residues 320–633 and 660–692; these read GPVP…AADS and PIAN…ANGS. Residues 346 to 504 are compositionally biased toward low complexity; the sequence is GSSSSSSVVS…SSTPLSGDSS (159 aa). Residues Asn-390, Asn-394, Asn-399, Asn-421, and Asn-473 are each glycosylated (N-linked (GlcNAc...) asparagine). Positions 505 to 519 are enriched in polar residues; that stretch reads QVSSLTTGTSPDTIA. Positions 520–544 are enriched in low complexity; it reads SFQTDSTSFGFGSGSPSSGAVQSSG. Residues 545–558 show a composition bias toward polar residues; the sequence is VTNSTPNTGDVNTQ. 2 stretches are compositionally biased toward low complexity: residues 559 to 590 and 597 to 625; these read SNTA…TTTG and NNNN…NTNN. Residues Asn-577, Asn-621, Asn-624, and Asn-663 are each glycosylated (N-linked (GlcNAc...) asparagine). Low complexity predominate over residues 665-679; it reads SSSPSSSSSSSSSSS. N-linked (GlcNAc...) asparagine glycosylation is present at Asn-690. Asn-690 carries the GPI-anchor amidated asparagine lipid modification. The propeptide at 691 to 714 is removed in mature form; it reads GSSKLSIGMTFMISGFATMFALFM.

Belongs to the HYR1/IFF family. The GPI-anchor is attached to the protein in the endoplasmic reticulum and serves to target the protein to the cell surface. There, the glucosamine-inositol phospholipid moiety is cleaved off and the GPI-modified mannoprotein is covalently attached via its lipidless GPI glycan remnant to the 1,6-beta-glucan of the outer cell wall layer.

Its subcellular location is the secreted. It localises to the cell wall. The protein resides in the membrane. In terms of biological role, GPI-anchored cell wall protein involved in cell wall organization, hyphal growth, as well as in host-fungal interaction and virulence. This chain is Cell wall protein IFF7 (IFF8), found in Candida albicans (strain SC5314 / ATCC MYA-2876) (Yeast).